The primary structure comprises 407 residues: TOM1-like protein 1 (407 aa).

At G2 the chain carries N-acetylglycine. Residues 55-183 (ATTENLEEPD…SLKARGIRFP (129 aa)) form the VHS domain. The 88-residue stretch at 228–315 (FTAEQTKEAF…TLSKYEEMNK (88 aa)) folds into the GAT domain. The segment at 315 to 407 (KPSAPLTSHE…SSKNDDLIRF (93 aa)) is disordered. S337 carries the post-translational modification Phosphoserine. Basic and acidic residues predominate over residues 337 to 347 (SPIHGREESLV). Gly residues predominate over residues 353 to 364 (VRGGFHGGGGSG). Over residues 388–407 (PDHDPKKEQSSSKNDDLIRF) the composition is skewed to basic and acidic residues.

Belongs to the TOM1 family. In terms of tissue distribution, ubiquitously expressed.

Its subcellular location is the membrane. Its function is as follows. Might contribute to the loading of the ESCRT machinery. This chain is TOM1-like protein 1, found in Arabidopsis thaliana (Mouse-ear cress).